A 356-amino-acid polypeptide reads, in one-letter code: V-type proton ATPase subunit d (356 aa).

This sequence belongs to the V-ATPase V0D/AC39 subunit family. In terms of assembly, V-ATPase is a heteromultimeric enzyme composed of a peripheral catalytic V1 complex (components A to H) attached to an integral membrane V0 proton pore complex (components: a, c, c', c'' and d).

Its function is as follows. Subunit of the integral membrane V0 complex of vacuolar ATPase. Vacuolar ATPase is responsible for acidifying a variety of intracellular compartments in eukaryotic cells, thus providing most of the energy required for transport processes in the vacuolar system. The sequence is that of V-type proton ATPase subunit d (vatD-1) from Dictyostelium discoideum (Social amoeba).